The primary structure comprises 196 residues: Proteasome subunit beta (196 aa).

Residue Met1 is a propeptide, removed in mature form; by autocatalysis. The Nucleophile role is filled by Thr2.

This sequence belongs to the peptidase T1B family. In terms of assembly, the 20S proteasome core is composed of 14 alpha and 14 beta subunits that assemble into four stacked heptameric rings, resulting in a barrel-shaped structure. The two inner rings, each composed of seven catalytic beta subunits, are sandwiched by two outer rings, each composed of seven alpha subunits. The catalytic chamber with the active sites is on the inside of the barrel. Has a gated structure, the ends of the cylinder being occluded by the N-termini of the alpha-subunits. Is capped at one or both ends by the proteasome regulatory ATPase, PAN.

The protein resides in the cytoplasm. The enzyme catalyses Cleavage of peptide bonds with very broad specificity.. Its activity is regulated as follows. The formation of the proteasomal ATPase PAN-20S proteasome complex, via the docking of the C-termini of PAN into the intersubunit pockets in the alpha-rings, triggers opening of the gate for substrate entry. Interconversion between the open-gate and close-gate conformations leads to a dynamic regulation of the 20S proteasome proteolysis activity. Its function is as follows. Component of the proteasome core, a large protease complex with broad specificity involved in protein degradation. The protein is Proteasome subunit beta of Nanoarchaeum equitans (strain Kin4-M).